A 250-amino-acid polypeptide reads, in one-letter code: 5'-nucleotidase SurE (250 aa).

4 residues coordinate a divalent metal cation: Asp-8, Asp-9, Ser-39, and Asn-91.

The protein belongs to the SurE nucleotidase family. A divalent metal cation serves as cofactor.

Its subcellular location is the cytoplasm. The catalysed reaction is a ribonucleoside 5'-phosphate + H2O = a ribonucleoside + phosphate. Its function is as follows. Nucleotidase that shows phosphatase activity on nucleoside 5'-monophosphates. This chain is 5'-nucleotidase SurE, found in Syntrophotalea carbinolica (strain DSM 2380 / NBRC 103641 / GraBd1) (Pelobacter carbinolicus).